A 147-amino-acid chain; its full sequence is Ribosome maturation factor RimP (147 aa).

The protein belongs to the RimP family.

The protein resides in the cytoplasm. Required for maturation of 30S ribosomal subunits. The sequence is that of Ribosome maturation factor RimP from Sulfurihydrogenibium azorense (strain DSM 15241 / OCM 825 / Az-Fu1).